We begin with the raw amino-acid sequence, 278 residues long: Biotin synthase (278 aa).

The Radical SAM core domain maps to 1–227 (MQIMLCAISN…QSVVMVAGGR (227 aa)). Residues Cys16, Cys20, and Cys23 each coordinate [4Fe-4S] cluster. Residues Cys60, Cys95, and Cys153 each contribute to the [2Fe-2S] cluster site.

This sequence belongs to the radical SAM superfamily. Biotin synthase family. In terms of assembly, homodimer. It depends on [4Fe-4S] cluster as a cofactor. Requires [2Fe-2S] cluster as cofactor.

It carries out the reaction (4R,5S)-dethiobiotin + (sulfur carrier)-SH + 2 reduced [2Fe-2S]-[ferredoxin] + 2 S-adenosyl-L-methionine = (sulfur carrier)-H + biotin + 2 5'-deoxyadenosine + 2 L-methionine + 2 oxidized [2Fe-2S]-[ferredoxin]. The protein operates within cofactor biosynthesis; biotin biosynthesis; biotin from 7,8-diaminononanoate: step 2/2. Its function is as follows. Catalyzes the conversion of dethiobiotin (DTB) to biotin by the insertion of a sulfur atom into dethiobiotin via a radical-based mechanism. This Campylobacter jejuni subsp. jejuni serotype O:23/36 (strain 81-176) protein is Biotin synthase.